A 402-amino-acid chain; its full sequence is Endo-polygalacturonase (402 aa).

Residues 1–23 (MEYQSGKRVLSLSLGLIGLFSAS) form the signal peptide. Disulfide bonds link Cys-41–Cys-62 and Cys-115–Cys-125. Asp-249 (proton donor) is an active-site residue. His-277 is an active-site residue.

The protein belongs to the glycosyl hydrolase 28 family. Monomer.

It localises to the secreted. It catalyses the reaction (1,4-alpha-D-galacturonosyl)n+m + H2O = (1,4-alpha-D-galacturonosyl)n + (1,4-alpha-D-galacturonosyl)m.. Functionally, involved in maceration and soft-rotting of plant tissue. This chain is Endo-polygalacturonase (pehA), found in Pectobacterium parmentieri.